The sequence spans 283 residues: Prepilin leader peptidase/N-methyltransferase (283 aa).

A run of 7 helical transmembrane segments spans residues 13–33 (VWLLALLLLGLIIGSFLNVVI), 106–126 (WRYPLIELLSGLSFLLAGLLW), 128–148 (PGLALLGALLCFGIFVALAAI), 153–173 (QLLPDVMTLPLLWGGLLFNLA), 176–196 (FVPLEQAVVGAVAGYLSLWLI), 216–236 (LLAALGAWLGWQALPNLVLIA), and 259–279 (LAFGPWLAVSGAMGLVLNVLG).

This sequence belongs to the peptidase A24 family.

Its subcellular location is the cell inner membrane. It carries out the reaction Typically cleaves a -Gly-|-Phe- bond to release an N-terminal, basic peptide of 5-8 residues from type IV prepilin, and then N-methylates the new N-terminal amino group, the methyl donor being S-adenosyl-L-methionine.. In terms of biological role, plays a role in type II pseudopili formation by proteolytically removing the leader sequence from substrate proteins and subsequently monomethylating the alpha-amino group of the newly exposed N-terminal phenylalanine. Substrates include proteins required for biogenesis of the type II general secretory apparatus. The chain is Prepilin leader peptidase/N-methyltransferase (outO) from Dickeya chrysanthemi (Pectobacterium chrysanthemi).